The sequence spans 247 residues: 1-(5-phosphoribosyl)-5-[(5-phosphoribosylamino)methylideneamino] imidazole-4-carboxamide isomerase (247 aa).

Asp16 serves as the catalytic Proton acceptor. The active-site Proton donor is the Asp135.

The protein belongs to the HisA/HisF family.

It localises to the cytoplasm. The enzyme catalyses 1-(5-phospho-beta-D-ribosyl)-5-[(5-phospho-beta-D-ribosylamino)methylideneamino]imidazole-4-carboxamide = 5-[(5-phospho-1-deoxy-D-ribulos-1-ylimino)methylamino]-1-(5-phospho-beta-D-ribosyl)imidazole-4-carboxamide. It functions in the pathway amino-acid biosynthesis; L-histidine biosynthesis; L-histidine from 5-phospho-alpha-D-ribose 1-diphosphate: step 4/9. The polypeptide is 1-(5-phosphoribosyl)-5-[(5-phosphoribosylamino)methylideneamino] imidazole-4-carboxamide isomerase (Paenarthrobacter aurescens (strain TC1)).